A 99-amino-acid chain; its full sequence is Phosphoribosyl-ATP pyrophosphatase (99 aa).

This sequence belongs to the PRA-PH family.

The protein localises to the cytoplasm. The enzyme catalyses 1-(5-phospho-beta-D-ribosyl)-ATP + H2O = 1-(5-phospho-beta-D-ribosyl)-5'-AMP + diphosphate + H(+). It functions in the pathway amino-acid biosynthesis; L-histidine biosynthesis; L-histidine from 5-phospho-alpha-D-ribose 1-diphosphate: step 2/9. This Methanosphaerula palustris (strain ATCC BAA-1556 / DSM 19958 / E1-9c) protein is Phosphoribosyl-ATP pyrophosphatase.